Consider the following 303-residue polypeptide: D-alanine--D-alanine ligase (303 aa).

An ATP-grasp domain is found at 100–295; sequence KQLLRRHGIL…FPALIARLIE (196 aa). 127-180 contributes to the ATP binding site; the sequence is GLGYPLFVKPNTGGSSLCLSRVTQPEGLAPALEAVFAHCGEAIVEPAIPGVEVT. Mg(2+) contacts are provided by D249, E262, and N264.

The protein belongs to the D-alanine--D-alanine ligase family. Mg(2+) is required as a cofactor. It depends on Mn(2+) as a cofactor.

It localises to the cytoplasm. It carries out the reaction 2 D-alanine + ATP = D-alanyl-D-alanine + ADP + phosphate + H(+). It participates in cell wall biogenesis; peptidoglycan biosynthesis. In terms of biological role, cell wall formation. In Nitratidesulfovibrio vulgaris (strain ATCC 29579 / DSM 644 / CCUG 34227 / NCIMB 8303 / VKM B-1760 / Hildenborough) (Desulfovibrio vulgaris), this protein is D-alanine--D-alanine ligase.